Consider the following 219-residue polypeptide: ATP synthase subunit a (219 aa).

6 consecutive transmembrane segments (helical) span residues 16–36 (LSNWLSMLIPLLFMVMSFWLI), 57–79 (LLMGPASFGANILVIALFLFILF), 96–116 (LAVTLSLAVPLWISFILYTWI), 122–142 (ALAHLVPLGTPAPLMPFMVLM), 158–178 (LAANMIAGHLLLTLLGAQGTL), and 184–204 (TSIVVFSQIILLMLEFSVAII).

This sequence belongs to the ATPase A chain family. In terms of assembly, F-type ATPases have 2 components, CF(1) - the catalytic core - and CF(0) - the membrane proton channel. CF(1) has five subunits: alpha(3), beta(3), gamma(1), delta(1), epsilon(1). CF(0) has three main subunits: a, b and c.

The protein localises to the mitochondrion inner membrane. In terms of biological role, mitochondrial membrane ATP synthase (F(1)F(0) ATP synthase or Complex V) produces ATP from ADP in the presence of a proton gradient across the membrane which is generated by electron transport complexes of the respiratory chain. F-type ATPases consist of two structural domains, F(1) - containing the extramembraneous catalytic core and F(0) - containing the membrane proton channel, linked together by a central stalk and a peripheral stalk. During catalysis, ATP synthesis in the catalytic domain of F(1) is coupled via a rotary mechanism of the central stalk subunits to proton translocation. Key component of the proton channel; it may play a direct role in the translocation of protons across the membrane. The polypeptide is ATP synthase subunit a (ATP6) (Artemia franciscana (Brine shrimp)).